Consider the following 1014-residue polypeptide: Latrophilin-like protein 1 (1014 aa).

An N-terminal signal peptide occupies residues 1-27 (MRRNKTTYSLLQTILVACLLTVTPTFA). The N-linked (GlcNAc...) asparagine glycan is linked to asparagine 4. The Extracellular segment spans residues 28 to 555 (SNKPTTDESG…IDQTLLTLLT (528 aa)). The 92-residue stretch at 43-134 (ICDGEAAELS…KYLEVKYNCV (92 aa)) folds into the SUEL-type lectin domain. The GAIN-B domain maps to 359–542 (ESNVIVQPAI…AVLMDVRGHD (184 aa)). N-linked (GlcNAc...) asparagine glycosylation is found at asparagine 473 and asparagine 518. 2 cysteine pairs are disulfide-bonded: cysteine 497-cysteine 524 and cysteine 512-cysteine 526. The segment at 497-542 (CVWWNHHELKWKPSGCKLSYHNKTMTSCDCTHLTHFAVLMDVRGHD) is GPS. Residues 556–576 (YVGCIISIICLLLTFFAYLIF) traverse the membrane as a helical segment. Topologically, residues 577-584 (SRNGGDRV) are cytoplasmic. Residues 585 to 605 (FIHENLCLSLAIAEITFLAGI) traverse the membrane as a helical segment. Residues 606–613 (TRTEDSLQ) are Extracellular-facing. The helical transmembrane segment at 614-634 (CGIIAVALMYMFLSALTWMLL) threads the bilayer. The Cytoplasmic portion of the chain corresponds to 635-653 (EGYHIHRMLTEVFPSDPRR). A helical membrane pass occupies residues 654 to 674 (FTYLLVGYIPPAIITLVAYLY). The Extracellular segment spans residues 675-692 (NSDGFGTPDHCWLSTQNN). A helical transmembrane segment spans residues 693–713 (FIWFFAGPACFIFCANSLVLV). Residues 714–745 (KTLCTVYQHTSGGYLPCRHDVDSGRSIRNWVK) are Cytoplasmic-facing. Residues 746 to 766 (GSLALASLLGVTWIFGLFWVE) form a helical membrane-spanning segment. Over 767 to 770 (DSRS) the chain is Extracellular. The chain crosses the membrane as a helical span at residues 771–791 (IVMAYVFTISNSLQGLFIFLF). Residues 792–1014 (HVVFAEKMRK…NKPSMYCQDL (223 aa)) are Cytoplasmic-facing. Disordered regions lie at residues 814–833 (GSSN…DLMS) and 932–994 (YQGW…EVTP). Residues 941–952 (PEFSPPPPPLST) show a composition bias toward pro residues. The segment covering 965–986 (SGRRPPSSKMSDDSAYSDGSSS) has biased composition (low complexity).

It belongs to the G-protein coupled receptor 2 family. LN-TM7 subfamily. In terms of assembly, monomer and homodimer. Post-translationally, autoproteolytically processed at the GPS region of the GAIN-B domain; this cleavage modulates receptor activity. Expressed in epidermal precursor cells and pharyngeal primordium. In adults expression is seen in pharyngeal muscle cells and nervous system, the nerve ring, the gonad, and the vulva.

The protein resides in the cell membrane. Its function is as follows. Has a role in the establishment of anterior-posterior polarity in tissues during embryogenesis. Required for the alignment of the mitotic spindles and division planes. May have a role in cell death events. Required for normal defection and oocyte fertilization. Involved in sperm function. Operates in pharyngeal pumping during feeding. The protein is Latrophilin-like protein 1 of Caenorhabditis elegans.